The following is a 108-amino-acid chain: UPF0060 membrane protein Sca_1835 (108 aa).

The next 4 helical transmembrane spans lie at 5 to 25 (ILIF…IWLW), 34 to 54 (FGLL…FQVF), 60 to 80 (VYAA…YVFD), and 84 to 104 (PDKY…IMLL).

The protein belongs to the UPF0060 family.

Its subcellular location is the cell membrane. The chain is UPF0060 membrane protein Sca_1835 from Staphylococcus carnosus (strain TM300).